The sequence spans 474 residues: UDP-N-acetylmuramoylalanine--D-glutamate ligase (474 aa).

134-140 contributes to the ATP binding site; sequence GSNGKST.

This sequence belongs to the MurCDEF family.

It is found in the cytoplasm. The enzyme catalyses UDP-N-acetyl-alpha-D-muramoyl-L-alanine + D-glutamate + ATP = UDP-N-acetyl-alpha-D-muramoyl-L-alanyl-D-glutamate + ADP + phosphate + H(+). The protein operates within cell wall biogenesis; peptidoglycan biosynthesis. Cell wall formation. Catalyzes the addition of glutamate to the nucleotide precursor UDP-N-acetylmuramoyl-L-alanine (UMA). In Thiobacillus denitrificans (strain ATCC 25259 / T1), this protein is UDP-N-acetylmuramoylalanine--D-glutamate ligase.